A 264-amino-acid polypeptide reads, in one-letter code: Phosphoribosylaminoimidazole-succinocarboxamide synthase (264 aa).

It belongs to the SAICAR synthetase family.

It catalyses the reaction 5-amino-1-(5-phospho-D-ribosyl)imidazole-4-carboxylate + L-aspartate + ATP = (2S)-2-[5-amino-1-(5-phospho-beta-D-ribosyl)imidazole-4-carboxamido]succinate + ADP + phosphate + 2 H(+). It participates in purine metabolism; IMP biosynthesis via de novo pathway; 5-amino-1-(5-phospho-D-ribosyl)imidazole-4-carboxamide from 5-amino-1-(5-phospho-D-ribosyl)imidazole-4-carboxylate: step 1/2. The polypeptide is Phosphoribosylaminoimidazole-succinocarboxamide synthase (purC) (Synechocystis sp. (strain ATCC 27184 / PCC 6803 / Kazusa)).